The sequence spans 176 residues: Endoribonuclease YbeY (176 aa).

Positions 138, 142, and 148 each coordinate Zn(2+).

Belongs to the endoribonuclease YbeY family. It depends on Zn(2+) as a cofactor.

It localises to the cytoplasm. Single strand-specific metallo-endoribonuclease involved in late-stage 70S ribosome quality control and in maturation of the 3' terminus of the 16S rRNA. The chain is Endoribonuclease YbeY from Trichormus variabilis (strain ATCC 29413 / PCC 7937) (Anabaena variabilis).